Reading from the N-terminus, the 120-residue chain is NAD(P)H-quinone oxidoreductase subunit 3, chloroplastic (120 aa).

Transmembrane regions (helical) follow at residues 3–23, 64–84, and 89–109; these read ILEG…IPVI, MFAL…PWAV, and LGLS…IGLV.

It belongs to the complex I subunit 3 family. In terms of assembly, NDH is composed of at least 16 different subunits, 5 of which are encoded in the nucleus.

It is found in the plastid. It localises to the chloroplast thylakoid membrane. It catalyses the reaction a plastoquinone + NADH + (n+1) H(+)(in) = a plastoquinol + NAD(+) + n H(+)(out). The catalysed reaction is a plastoquinone + NADPH + (n+1) H(+)(in) = a plastoquinol + NADP(+) + n H(+)(out). Its function is as follows. NDH shuttles electrons from NAD(P)H:plastoquinone, via FMN and iron-sulfur (Fe-S) centers, to quinones in the photosynthetic chain and possibly in a chloroplast respiratory chain. The immediate electron acceptor for the enzyme in this species is believed to be plastoquinone. Couples the redox reaction to proton translocation, and thus conserves the redox energy in a proton gradient. This chain is NAD(P)H-quinone oxidoreductase subunit 3, chloroplastic, found in Nephroselmis olivacea (Green alga).